The following is a 161-amino-acid chain: Arachidonate 5-lipoxygenase-activating protein (161 aa).

Over 1–8 the chain is Lumenal; the sequence is MDQEAVGN. A helical membrane pass occupies residues 9–30; it reads IVLLAIVTLISVVQNGFFAHKV. The Cytoplasmic portion of the chain corresponds to 31–52; that stretch reads EHESKTHNGRSFQRTGTLAFER. The chain crosses the membrane as a helical span at residues 53-77; it reads VYTANQNCVDAYPTFLVMLWSAGLL. Over 78-80 the chain is Lumenal; sequence CSQ. The chain crosses the membrane as a helical span at residues 81–102; the sequence is VPAAFAGLMYLFVRQKYFVGYL. At 103–107 the chain is on the cytoplasmic side; that stretch reads GERTQ. The stretch at 108 to 115 is an intramembrane region; that stretch reads STPGYIFG. The chain crosses the membrane as a helical span at residues 116–128; it reads KRIILFLFAMSLA. Residues 129 to 161 are Lumenal-facing; sequence GILNYFFIALFGSDFENYIKTVTTTISPLLLIP.

This sequence belongs to the MAPEG family. As to quaternary structure, homotrimer. Interacts with LTC4S and ALOX5.

Its subcellular location is the nucleus membrane. The protein localises to the endoplasmic reticulum membrane. Required for leukotriene biosynthesis by ALOX5 (5-lipoxygenase). Anchors ALOX5 to the membrane. Binds arachidonic acid, and could play an essential role in the transfer of arachidonic acid to ALOX5. Binds to MK-886, a compound that blocks the biosynthesis of leukotrienes. The chain is Arachidonate 5-lipoxygenase-activating protein (ALOX5AP) from Bos taurus (Bovine).